The sequence spans 1664 residues: DNA-directed RNA polymerase I subunit RPA190 (1664 aa).

8 residues coordinate Zn(2+): Cys-62, Cys-65, Cys-72, His-75, Cys-102, Cys-105, Cys-233, and Cys-236. Positions 280 to 310 (QAKKLDGSNEASANDEESFDVGRNPTTRPKT) are disordered. Residues Asp-627, Asp-629, and Asp-631 each contribute to the Mg(2+) site. A Phosphoserine modification is found at Ser-889. A bridging helix region spans residues 992 to 1004 (PQEYYFHCMAGRE). Positions 1343-1423 (DIGVAVPRLQ…DSDSEDEDVD (81 aa)) are disordered. The span at 1393 to 1414 (ETMREAEKSSDEEGIDSDKESD) shows a compositional bias: basic and acidic residues. Residue Ser-1636 is modified to Phosphoserine.

Belongs to the RNA polymerase beta' chain family. As to quaternary structure, component of the RNA polymerase I (Pol I) complex consisting of 14 subunits: RPA135, RPA190, RPC40, RPA14, RPB5, RPO26, RPA43, RPB8, RPA12, RPB10, RPC19, RPC10, RPA49 and RPA34. The complex is composed of a horseshoe-shaped core containing ten subunits (RPA135, RPA190, RPB5, RPO26, RPB8, RPB10, RPC10, RPA12, RPC19 and RPC40) where RPA135 and RPA190 form the DNA-binding cleft. Outside of the core, RPA14 and RPA43 form the stalk that mediates interactions with transcription initiation factors and newly synthesized RNA.

The protein resides in the nucleus. It localises to the nucleolus. It catalyses the reaction RNA(n) + a ribonucleoside 5'-triphosphate = RNA(n+1) + diphosphate. In terms of biological role, DNA-dependent RNA polymerases catalyze the transcription of DNA into RNA using the four ribonucleoside triphosphates as substrates. Component of RNA polymerase I (Pol I) which synthesizes ribosomal RNA precursors. Besides, RNA polymerase I has intrinsic RNA cleavage activity. RPA190 and RPA135 both contribute to the polymerase catalytic activity and together form the Pol I active center. In addition, subunit RPA12 contributes a catalytic zinc ribbon that is required for RNA cleavage by Pol I. A single stranded DNA template strand of the promoter is positioned within the central active site cleft of Pol I. A bridging helix emanates from RPA190 and crosses the cleft near the catalytic site and is thought to promote translocation of Pol I by acting as a ratchet that moves the RNA-DNA hybrid through the active site by switching from straight to bent conformations at each step of nucleotide addition. In Saccharomyces cerevisiae (strain ATCC 204508 / S288c) (Baker's yeast), this protein is DNA-directed RNA polymerase I subunit RPA190 (RPA190).